We begin with the raw amino-acid sequence, 607 residues long: Dihydroxy-acid dehydratase (607 aa).

Asp81 lines the Mg(2+) pocket. Cys122 contacts [2Fe-2S] cluster. Positions 123 and 124 each coordinate Mg(2+). At Lys124 the chain carries N6-carboxylysine. Residue Cys195 coordinates [2Fe-2S] cluster. Glu489 contacts Mg(2+). Ser515 serves as the catalytic Proton acceptor.

It belongs to the IlvD/Edd family. In terms of assembly, homodimer. Requires [2Fe-2S] cluster as cofactor. The cofactor is Mg(2+).

It carries out the reaction (2R)-2,3-dihydroxy-3-methylbutanoate = 3-methyl-2-oxobutanoate + H2O. It catalyses the reaction (2R,3R)-2,3-dihydroxy-3-methylpentanoate = (S)-3-methyl-2-oxopentanoate + H2O. It participates in amino-acid biosynthesis; L-isoleucine biosynthesis; L-isoleucine from 2-oxobutanoate: step 3/4. The protein operates within amino-acid biosynthesis; L-valine biosynthesis; L-valine from pyruvate: step 3/4. Functionally, functions in the biosynthesis of branched-chain amino acids. Catalyzes the dehydration of (2R,3R)-2,3-dihydroxy-3-methylpentanoate (2,3-dihydroxy-3-methylvalerate) into 2-oxo-3-methylpentanoate (2-oxo-3-methylvalerate) and of (2R)-2,3-dihydroxy-3-methylbutanoate (2,3-dihydroxyisovalerate) into 2-oxo-3-methylbutanoate (2-oxoisovalerate), the penultimate precursor to L-isoleucine and L-valine, respectively. This chain is Dihydroxy-acid dehydratase, found in Deinococcus radiodurans (strain ATCC 13939 / DSM 20539 / JCM 16871 / CCUG 27074 / LMG 4051 / NBRC 15346 / NCIMB 9279 / VKM B-1422 / R1).